A 137-amino-acid chain; its full sequence is Large-conductance mechanosensitive channel (137 aa).

Helical transmembrane passes span 15–35 (IDLA…NSIV), 38–58 (IFMP…MFIQ), and 80–100 (GNFI…FLFV).

It belongs to the MscL family. Homopentamer.

Its subcellular location is the cell inner membrane. In terms of biological role, channel that opens in response to stretch forces in the membrane lipid bilayer. May participate in the regulation of osmotic pressure changes within the cell. The sequence is that of Large-conductance mechanosensitive channel from Bartonella henselae (strain ATCC 49882 / DSM 28221 / CCUG 30454 / Houston 1) (Rochalimaea henselae).